A 276-amino-acid chain; its full sequence is MTLKKLNLHLVSDSSGETVISVAKSALKHFRSVETIEYVWSFVKGEEQIDKILEEINRKSDEHNFVICTITDDELRKYLKDNCIKLKIPYRAILSHIIREISSYLEIEKDEKLDLHTEINNEYFQRIEAINYTINHDDGQNIQDIDKADIILVGVSRTSKSPTSTYLAYRGYKVANIPFVSGVPFYVDLAKLKNKLTIGVTIDVSRLIEIRKNRLTSINNEDNNIYANPEKVEKEIKEAEELFKQNNWPIIDVTQKSIEEVSATIIQYFNKMLSID.

154–161 is a binding site for ADP; sequence GVSRTSKS.

This sequence belongs to the pyruvate, phosphate/water dikinase regulatory protein family. PDRP subfamily.

It carries out the reaction N(tele)-phospho-L-histidyl/L-threonyl-[pyruvate, phosphate dikinase] + ADP = N(tele)-phospho-L-histidyl/O-phospho-L-threonyl-[pyruvate, phosphate dikinase] + AMP + H(+). The catalysed reaction is N(tele)-phospho-L-histidyl/O-phospho-L-threonyl-[pyruvate, phosphate dikinase] + phosphate + H(+) = N(tele)-phospho-L-histidyl/L-threonyl-[pyruvate, phosphate dikinase] + diphosphate. Functionally, bifunctional serine/threonine kinase and phosphorylase involved in the regulation of the pyruvate, phosphate dikinase (PPDK) by catalyzing its phosphorylation/dephosphorylation. In Wolbachia pipientis wMel, this protein is Putative pyruvate, phosphate dikinase regulatory protein.